Here is a 375-residue protein sequence, read N- to C-terminus: Protein SSUH2 homolog (375 aa).

Expressed in enterocytes of small and large intestinal mucosa (at protein level). Expressed in chromaffine and interstitial cells. Expressed in peripheral blood and gingival cells.

It is found in the cytoplasm. It localises to the nucleus. Functionally, plays a role in odontogenesis. This is Protein SSUH2 homolog from Homo sapiens (Human).